The primary structure comprises 234 residues: Ion-translocating oxidoreductase complex subunit E (234 aa).

The next 5 membrane-spanning stretches (helical) occupy residues leucine 62–phenylalanine 82, isoleucine 92–alanine 112, threonine 116–glycine 136, isoleucine 151–leucine 171, and serine 205–isoleucine 225.

Belongs to the NqrDE/RnfAE family. As to quaternary structure, the complex is composed of six subunits: RnfA, RnfB, RnfC, RnfD, RnfE and RnfG.

The protein localises to the cell inner membrane. In terms of biological role, part of a membrane-bound complex that couples electron transfer with translocation of ions across the membrane. This Haemophilus influenzae (strain PittGG) protein is Ion-translocating oxidoreductase complex subunit E.